A 404-amino-acid polypeptide reads, in one-letter code: Histidine--tRNA ligase (404 aa).

The protein belongs to the class-II aminoacyl-tRNA synthetase family.

The protein localises to the cytoplasm. It carries out the reaction tRNA(His) + L-histidine + ATP = L-histidyl-tRNA(His) + AMP + diphosphate + H(+). The polypeptide is Histidine--tRNA ligase (Nanoarchaeum equitans (strain Kin4-M)).